The following is a 319-amino-acid chain: MIDLAPLARRLAGTPLADWANGLQAQLDTKMAKGHGDLQRWQSALDALPDLQPERIDLLDSFTLQAECNGETRTVLRKALLGLSPWRKGPFNVFGVHIDTEWRSDWKWSRVSPHLDLKGKRVLDVGCGNGYYQWRMLGAGADSVIGVDPNWLFFCQFQAMQRYLPDLPAWHLPFALEDLPANLEGFDTVFSMGVLYHRKSPIDHLLALKDCLVKGGELVMETLVVPGDVHQVLVPEDRYAQMRNVWFLPSVPALELWMRRAGFTDVRCVDVSHTTIEEQRSTEWMRFQSLSDYLDPADHSKTVEGLPAPMRAVIVGRKP.

Carboxy-S-adenosyl-L-methionine contacts are provided by residues Lys-88, Trp-102, Lys-107, Gly-126, 176–177 (LE), Met-192, Tyr-196, and Arg-311.

It belongs to the class I-like SAM-binding methyltransferase superfamily. CmoB family. As to quaternary structure, homotetramer.

The enzyme catalyses carboxy-S-adenosyl-L-methionine + 5-hydroxyuridine(34) in tRNA = 5-carboxymethoxyuridine(34) in tRNA + S-adenosyl-L-homocysteine + H(+). Catalyzes carboxymethyl transfer from carboxy-S-adenosyl-L-methionine (Cx-SAM) to 5-hydroxyuridine (ho5U) to form 5-carboxymethoxyuridine (cmo5U) at position 34 in tRNAs. The protein is tRNA U34 carboxymethyltransferase of Pseudomonas savastanoi pv. phaseolicola (strain 1448A / Race 6) (Pseudomonas syringae pv. phaseolicola (strain 1448A / Race 6)).